The sequence spans 92 residues: Small ribosomal subunit protein uS19 (92 aa).

It belongs to the universal ribosomal protein uS19 family.

Protein S19 forms a complex with S13 that binds strongly to the 16S ribosomal RNA. This chain is Small ribosomal subunit protein uS19, found in Brucella ovis (strain ATCC 25840 / 63/290 / NCTC 10512).